A 553-amino-acid polypeptide reads, in one-letter code: Putative transport protein YidE (553 aa).

The next 5 membrane-spanning stretches (helical) occupy residues 4–24 (IALT…IGNV), 28–48 (GIGL…HFVS), 65–85 (FGLI…FFAS), 95–115 (LFAV…HKLF), and 158–178 (MSYA…MWML). RCK C-terminal domains lie at 191–276 (QQHE…VIGQ) and 279–361 (DTSL…VLGN). Transmembrane regions (helical) follow at residues 371-391 (MLPV…PVFV), 393-413 (GFPA…ALIL), 439-459 (IVLF…NTLV), 464-484 (LSWI…VGIL), 493-513 (YLTM…LAFA), and 533-553 (LVMF…WSIG).

It belongs to the AAE transporter (TC 2.A.81) family. YidE subfamily.

The protein localises to the cell membrane. The chain is Putative transport protein YidE from Escherichia coli (strain ATCC 8739 / DSM 1576 / NBRC 3972 / NCIMB 8545 / WDCM 00012 / Crooks).